The chain runs to 506 residues: Maturase K (506 aa).

It belongs to the intron maturase 2 family. MatK subfamily.

It localises to the plastid. The protein resides in the chloroplast. Functionally, usually encoded in the trnK tRNA gene intron. Probably assists in splicing its own and other chloroplast group II introns. The chain is Maturase K from Mentzelia lindleyi (Blazing star).